Here is a 358-residue protein sequence, read N- to C-terminus: Peroxisome biogenesis protein 3-1 (358 aa).

Residues 15–32 (ILVTTTCLGSGYLLYKLY) traverse the membrane as a helical segment. Positions 33 to 62 (NAHTRKLADLERELANERENDEIIKTQMKA) form a coiled coil.

Belongs to the peroxin-3 family.

The protein localises to the peroxisome membrane. Involved in morphology determination of peroxisomes, but not in import of peroxisomal matrix proteins. May act as a docking factor for PEX19 and be necessary for the import of peroxisomal membrane proteins in the peroxisomes. The protein is Peroxisome biogenesis protein 3-1 (PEX3-1) of Arabidopsis thaliana (Mouse-ear cress).